Here is a 570-residue protein sequence, read N- to C-terminus: Sulfite reductase [NADPH] hemoprotein beta-component (570 aa).

[4Fe-4S] cluster is bound by residues Cys-434, Cys-440, Cys-479, and Cys-483. Cys-483 contributes to the siroheme binding site.

This sequence belongs to the nitrite and sulfite reductase 4Fe-4S domain family. As to quaternary structure, alpha(8)-beta(8). The alpha component is a flavoprotein, the beta component is a hemoprotein. Requires siroheme as cofactor. It depends on [4Fe-4S] cluster as a cofactor.

It carries out the reaction hydrogen sulfide + 3 NADP(+) + 3 H2O = sulfite + 3 NADPH + 4 H(+). It participates in sulfur metabolism; hydrogen sulfide biosynthesis; hydrogen sulfide from sulfite (NADPH route): step 1/1. In terms of biological role, component of the sulfite reductase complex that catalyzes the 6-electron reduction of sulfite to sulfide. This is one of several activities required for the biosynthesis of L-cysteine from sulfate. The chain is Sulfite reductase [NADPH] hemoprotein beta-component from Salmonella agona (strain SL483).